A 167-amino-acid chain; its full sequence is MINVEIVRNYNKWREYKQINKSLIKKITQNILLRFDNFSKIKQFELSILLTNAAEILTLNKQFRNIEKATNVLSFPSNELNWQDLYSKLEFLDDSDYMHLGDIAFCYEVIYNESCEQHKTFENHFIHLLIHSILHLIGFDHQNDTEANIMENLEIEILSYFGIFPPY.

Residues H131, H135, and H141 each coordinate Zn(2+).

This sequence belongs to the endoribonuclease YbeY family. Zn(2+) serves as cofactor.

Its subcellular location is the cytoplasm. Single strand-specific metallo-endoribonuclease involved in late-stage 70S ribosome quality control and in maturation of the 3' terminus of the 16S rRNA. The sequence is that of Endoribonuclease YbeY from Rickettsia africae (strain ESF-5).